The sequence spans 652 residues: Probable endo-1,3(4)-beta-glucanase AFUB_029980 (652 aa).

Residues 1–21 form the signal peptide; sequence MAPSSLLLSVGSLITSSLVSA. The GH16 domain occupies 36–289; it reads ESWQGESFIN…WAGNVFAEST (254 aa). Residue N64 is glycosylated (N-linked (GlcNAc...) asparagine). Catalysis depends on E145, which acts as the Nucleophile. Catalysis depends on E150, which acts as the Proton donor. Residues N200 and N208 are each glycosylated (N-linked (GlcNAc...) asparagine). The tract at residues 379–423 is disordered; that stretch reads NTVATSAADHATPSSAETTTVPAATGAPSVSATEGGDSELESTST. The span at 390–410 shows a compositional bias: polar residues; the sequence is TPSSAETTTVPAATGAPSVSA. N453 carries an N-linked (GlcNAc...) asparagine glycan. Positions 509-551 are disordered; sequence SEIPTAPPEPVSQAVSTGSFDDSDTAQGDSEEQGSIASASVAP. Positions 529–540 are enriched in acidic residues; the sequence is DDSDTAQGDSEE. Residue N630 is the site of GPI-anchor amidated asparagine attachment. Positions 631-652 are cleaved as a propeptide — removed in mature form; that stretch reads GANRMSVGLSGLIGVMFIAALA.

It belongs to the glycosyl hydrolase 16 family.

It localises to the cell membrane. It carries out the reaction Endohydrolysis of (1-&gt;3)- or (1-&gt;4)-linkages in beta-D-glucans when the glucose residue whose reducing group is involved in the linkage to be hydrolyzed is itself substituted at C-3.. In terms of biological role, mixed-linked glucanase involved in the degradation of complex natural cellulosic substrates. The sequence is that of Probable endo-1,3(4)-beta-glucanase AFUB_029980 from Aspergillus fumigatus (strain CBS 144.89 / FGSC A1163 / CEA10) (Neosartorya fumigata).